Here is a 249-residue protein sequence, read N- to C-terminus: Sugar fermentation stimulation protein homolog (249 aa).

The protein belongs to the SfsA family.

In Synechococcus sp. (strain RCC307), this protein is Sugar fermentation stimulation protein homolog.